Reading from the N-terminus, the 163-residue chain is Putative 4-hydroxy-4-methyl-2-oxoglutarate aldolase (163 aa).

Residues 76-79 (GDML) and R98 contribute to the substrate site. D99 serves as a coordination point for a divalent metal cation.

It belongs to the class II aldolase/RraA-like family. As to quaternary structure, homotrimer. A divalent metal cation serves as cofactor.

The enzyme catalyses 4-hydroxy-4-methyl-2-oxoglutarate = 2 pyruvate. It carries out the reaction oxaloacetate + H(+) = pyruvate + CO2. Functionally, catalyzes the aldol cleavage of 4-hydroxy-4-methyl-2-oxoglutarate (HMG) into 2 molecules of pyruvate. Also contains a secondary oxaloacetate (OAA) decarboxylase activity due to the common pyruvate enolate transition state formed following C-C bond cleavage in the retro-aldol and decarboxylation reactions. This Pseudomonas fluorescens (strain ATCC BAA-477 / NRRL B-23932 / Pf-5) protein is Putative 4-hydroxy-4-methyl-2-oxoglutarate aldolase.